Here is a 334-residue protein sequence, read N- to C-terminus: MGMKKNRPRRGSLAFSPRKRAKKLVPKIRSWPADKKVGLQAFPVYKAGTTHALLIENNPKSPNNGQEVFTPVTVLETPDVTVAGIRLYEKTTKGLKALTEVWAEQLDGDLGRKLTLAKKEEKKTADALDAVVEKATEVRAIVHTNPKTTGIPKKKPEVVEIRIGGSSVAERLAYAKEILGKTLAIGDVFEAGEIIDTLAITKGKGFQGSVKRWGIKVQFGKHQRKGVGRHTGSIGPWRPRRVMWTVPLPGQMGFHQRTEYNKRILKLGSEGAEITPKGGFLNYGAVKNGYVVVKGTVQGPAKRLVVLRGSVRAAEDKFGLPEVAYISTESKQGN.

Positions 1 to 10 (MGMKKNRPRR) are enriched in basic residues. The tract at residues 1–21 (MGMKKNRPRRGSLAFSPRKRA) is disordered.

Belongs to the universal ribosomal protein uL3 family. As to quaternary structure, part of the 50S ribosomal subunit. Forms a cluster with proteins L14 and L24e.

In terms of biological role, one of the primary rRNA binding proteins, it binds directly near the 3'-end of the 23S rRNA, where it nucleates assembly of the 50S subunit. The polypeptide is Large ribosomal subunit protein uL3 (Methanococcus maripaludis (strain C5 / ATCC BAA-1333)).